The primary structure comprises 572 residues: Proline--tRNA ligase (572 aa).

The protein belongs to the class-II aminoacyl-tRNA synthetase family. ProS type 1 subfamily. As to quaternary structure, homodimer.

The protein localises to the cytoplasm. It carries out the reaction tRNA(Pro) + L-proline + ATP = L-prolyl-tRNA(Pro) + AMP + diphosphate. Its function is as follows. Catalyzes the attachment of proline to tRNA(Pro) in a two-step reaction: proline is first activated by ATP to form Pro-AMP and then transferred to the acceptor end of tRNA(Pro). As ProRS can inadvertently accommodate and process non-cognate amino acids such as alanine and cysteine, to avoid such errors it has two additional distinct editing activities against alanine. One activity is designated as 'pretransfer' editing and involves the tRNA(Pro)-independent hydrolysis of activated Ala-AMP. The other activity is designated 'posttransfer' editing and involves deacylation of mischarged Ala-tRNA(Pro). The misacylated Cys-tRNA(Pro) is not edited by ProRS. This Cronobacter sakazakii (strain ATCC BAA-894) (Enterobacter sakazakii) protein is Proline--tRNA ligase.